Reading from the N-terminus, the 397-residue chain is uncharacterized protein (397 aa).

Disordered regions lie at residues 159–203 (LNSS…KSTI) and 221–397 (NSVK…KTKN). Positions 221-240 (NSVKSSPSKSFVSISSPVQS) are enriched in low complexity. Polar residues-rich tracts occupy residues 285–309 (TSTL…SSST) and 320–330 (VNPNSTSSVTF). Residues 342–371 (CSRCKKSKKGCDRQRPCGRCRDAGLNSEDC) constitute a DNA-binding region (zn(2)-C6 fungal-type). Over residues 350-363 (KGCDRQRPCGRCRD) the composition is skewed to basic and acidic residues. Over residues 383-397 (RKPRGRGRGRPKTKN) the composition is skewed to basic residues.

It is found in the nucleus. This is an uncharacterized protein from Schizosaccharomyces pombe (strain 972 / ATCC 24843) (Fission yeast).